Here is a 174-residue protein sequence, read N- to C-terminus: Calcineurin subunit B (174 aa).

4 EF-hand domains span residues 21-56, 60-88, 90-125, and 131-166; these read EEIERLRKRFMKLDKDGSGTIDKNEFLTIPGISSNP, RLMDVFDEDGNGTIDFQEFIMGLSAFSGK, SKLDKLKFAFKIYDIDRDGYIGNGELFIVMKMMVGK, and ELQQIVDKTMMEADEDGDGRLNFHEFKNAVDSKSVA. The Ca(2+) site is built by Asp-34, Asp-36, Ser-38, Thr-40, Glu-45, Asp-66, Asp-68, Asn-70, Thr-72, Glu-77, Asp-103, Asp-105, Asp-107, Tyr-109, Glu-114, Asp-144, Asp-146, Asp-148, Arg-150, and Glu-155.

Belongs to the calcineurin regulatory subunit family. In terms of assembly, composed of a catalytic subunit (A) and a regulatory subunit (B).

Its function is as follows. Regulatory subunit of calcineurin, a calcium-dependent, calmodulin stimulated protein phosphatase. Confers calcium sensitivity. This chain is Calcineurin subunit B (CNB1), found in Debaryomyces hansenii (strain ATCC 36239 / CBS 767 / BCRC 21394 / JCM 1990 / NBRC 0083 / IGC 2968) (Yeast).